A 415-amino-acid chain; its full sequence is Phosphoglycerate kinase (415 aa).

Valine 22, aspartate 23, phenylalanine 24, asparagine 25, glutamine 37, arginine 38, serine 61, histidine 62, glycine 64, leucine 120, arginine 121, histidine 168, and arginine 169 together coordinate (2R)-3-phosphoglycerate. Glycine 212 lines the ADP pocket. Glycine 212 is a CDP binding site. Residues alanine 213 and lysine 214 each coordinate AMP. Alanine 213 contacts ATP. Position 213 (alanine 213) interacts with Mg(2+). Aspartate 217 contacts CDP. Aspartate 217 serves as a coordination point for Mg(2+). Position 218 (lysine 218) interacts with AMP. An ATP-binding site is contributed by lysine 218. An ADP-binding site is contributed by glycine 236. A CDP-binding site is contributed by glycine 236. AMP contacts are provided by glycine 237 and glycine 311. 2 residues coordinate ATP: glycine 237 and glycine 311. Residues glycine 336 and phenylalanine 341 each coordinate CDP. Phenylalanine 341 serves as a coordination point for ADP. Glutamate 342 contributes to the AMP binding site. Residues glutamate 342, aspartate 373, and threonine 374 each contribute to the ATP site. Aspartate 373 provides a ligand contact to Mg(2+).

Belongs to the phosphoglycerate kinase family. As to quaternary structure, monomer. It depends on Mg(2+) as a cofactor.

Its subcellular location is the cytoplasm. It catalyses the reaction (2R)-3-phosphoglycerate + ATP = (2R)-3-phospho-glyceroyl phosphate + ADP. The protein operates within carbohydrate degradation; glycolysis; pyruvate from D-glyceraldehyde 3-phosphate: step 2/5. The protein is Phosphoglycerate kinase (PGK) of Opisthorchis sinensis (Clonorchis sinensis).